Consider the following 223-residue polypeptide: Phosphoribosylformylglycinamidine synthase subunit PurQ (223 aa).

A Glutamine amidotransferase type-1 domain is found at F3–V223. C85 functions as the Nucleophile in the catalytic mechanism. Active-site residues include H193 and E195.

As to quaternary structure, part of the FGAM synthase complex composed of 1 PurL, 1 PurQ and 2 PurS subunits.

The protein resides in the cytoplasm. The catalysed reaction is N(2)-formyl-N(1)-(5-phospho-beta-D-ribosyl)glycinamide + L-glutamine + ATP + H2O = 2-formamido-N(1)-(5-O-phospho-beta-D-ribosyl)acetamidine + L-glutamate + ADP + phosphate + H(+). It carries out the reaction L-glutamine + H2O = L-glutamate + NH4(+). Its pathway is purine metabolism; IMP biosynthesis via de novo pathway; 5-amino-1-(5-phospho-D-ribosyl)imidazole from N(2)-formyl-N(1)-(5-phospho-D-ribosyl)glycinamide: step 1/2. Part of the phosphoribosylformylglycinamidine synthase complex involved in the purines biosynthetic pathway. Catalyzes the ATP-dependent conversion of formylglycinamide ribonucleotide (FGAR) and glutamine to yield formylglycinamidine ribonucleotide (FGAM) and glutamate. The FGAM synthase complex is composed of three subunits. PurQ produces an ammonia molecule by converting glutamine to glutamate. PurL transfers the ammonia molecule to FGAR to form FGAM in an ATP-dependent manner. PurS interacts with PurQ and PurL and is thought to assist in the transfer of the ammonia molecule from PurQ to PurL. The protein is Phosphoribosylformylglycinamidine synthase subunit PurQ of Staphylococcus aureus (strain USA300).